A 66-amino-acid polypeptide reads, in one-letter code: FMRFamide-like neuropeptide 21 (66 aa).

The first 16 residues, 1 to 16, serve as a signal peptide directing secretion; sequence MRLFILLSCLLAWVLA.

The protein belongs to the FARP (FMRFamide related peptide) family. In terms of processing, may be processed by convertase egl-3. As to expression, expressed in the ADL, ASE and ASH sensory neurons, the URA motor neurons and the MC, M2 and M4 pharyngeal neurons.

Its subcellular location is the secreted. FMRFamide-like neuropeptide. Involved in modulating locomotion quiescence during the sleep-like state called lethargus which occurs during molting between larval and adult stages, acting via the G-protein coupled receptor npr-1. Plays a role in modulating social and feeding behavior. Its function is as follows. Ligand to G-protein coupled receptor npr-1. The chain is FMRFamide-like neuropeptide 21 from Caenorhabditis elegans.